Consider the following 396-residue polypeptide: Elongation factor Tu (396 aa).

Residues lysine 10–threonine 206 enclose the tr-type G domain. Positions glycine 19–threonine 26 are G1. Glycine 19–threonine 26 lines the GTP pocket. Threonine 26 serves as a coordination point for Mg(2+). Residues glycine 60–serine 64 form a G2 region. Residues aspartate 81–glycine 84 form a G3 region. Residues aspartate 81–histidine 85 and asparagine 136–aspartate 139 contribute to the GTP site. Residues asparagine 136–aspartate 139 are G4. The tract at residues serine 174 to arginine 176 is G5.

This sequence belongs to the TRAFAC class translation factor GTPase superfamily. Classic translation factor GTPase family. EF-Tu/EF-1A subfamily. In terms of assembly, monomer.

The protein resides in the cytoplasm. It carries out the reaction GTP + H2O = GDP + phosphate + H(+). Functionally, GTP hydrolase that promotes the GTP-dependent binding of aminoacyl-tRNA to the A-site of ribosomes during protein biosynthesis. In Xanthomonas oryzae pv. oryzae (strain MAFF 311018), this protein is Elongation factor Tu.